Reading from the N-terminus, the 510-residue chain is MAVGNGVLLHIAASLMLFFHVQKLVQYLWMNSRRHRLPPGPIGWPVLGALRLLGTMPHVALANMAKKYGPVMYLKVGSCGLAVASTPEAAKAFLKTLDMNFSNRPPNAGATHLAYNAQDMVFADYGPRWKLLRKLSNIHILGGKALQGWEEVRKKELGYMLYAMAESGRHGQPVVVSEMLTYAMANMLGQVMLSKRVFGSQGSESNEFKDMVVELMTVAGYFNIGDFIPSIAWMDLQGIQGGMKRLHKKFDALLTRLLEEHTASAHERKGSPDFLDFVVANGDNSEGERLQTVNIKALLLNMFTAGTDTSSSVIEWALAELLKNPIILRRAQEEMDGVIGRDRRFLEADISKLPYLQAICKEAFRKHPSTPLNLPRIASQACEVNGHYIPKGTRLSVNIWAIGRDPSVWENPNEFNPDRFLERKNAKIDPRGNDFELIPFGAGRRICAGTRLGILLVEYILGTLVHSFVWELPSSVIELNMDESFGLALQKAVPLAAMVTPRLPLHIYSP.

C447 is a binding site for heme.

This sequence belongs to the cytochrome P450 family. Heme is required as a cofactor.

The catalysed reaction is a 3',5'-unsubstituted flavanone + 2 reduced [NADPH--hemoprotein reductase] + 2 O2 = a 3',5'-dihydroxyflavanone + 2 oxidized [NADPH--hemoprotein reductase] + 2 H2O + 2 H(+). Its pathway is pigment biosynthesis; anthocyanin biosynthesis. Catalyzes the 3'5'-hydroxylation of naringenin and eriodictyol to form 5,7,3,'4',5'-pentahydroxyflavanone and 3',5'-hydroxylation of dihydrokaempferol and dihydroquercetin to form dihydromyricetin. The polypeptide is Flavonoid 3',5'-hydroxylase (CYP75A7) (Eustoma exaltatum subsp. russellianum (Bluebells)).